The sequence spans 295 residues: 3-methyl-2-oxobutanoate hydroxymethyltransferase (295 aa).

Residues aspartate 53 and aspartate 92 each coordinate Mg(2+). 3-methyl-2-oxobutanoate contacts are provided by residues 53–54 (DS), aspartate 92, and lysine 122. Glutamate 124 contributes to the Mg(2+) binding site. The active-site Proton acceptor is glutamate 191.

Belongs to the PanB family. As to quaternary structure, homodecamer; pentamer of dimers. The cofactor is Mg(2+).

It localises to the cytoplasm. The catalysed reaction is 3-methyl-2-oxobutanoate + (6R)-5,10-methylene-5,6,7,8-tetrahydrofolate + H2O = 2-dehydropantoate + (6S)-5,6,7,8-tetrahydrofolate. It functions in the pathway cofactor biosynthesis; (R)-pantothenate biosynthesis; (R)-pantoate from 3-methyl-2-oxobutanoate: step 1/2. Catalyzes the reversible reaction in which hydroxymethyl group from 5,10-methylenetetrahydrofolate is transferred onto alpha-ketoisovalerate to form ketopantoate. In Koribacter versatilis (strain Ellin345), this protein is 3-methyl-2-oxobutanoate hydroxymethyltransferase.